Reading from the N-terminus, the 1183-residue chain is Formin-like protein (1183 aa).

2 disordered regions span residues 1–44 (MGAV…SISS) and 63–82 (QHVR…PTTD). Over residues 23 to 36 (PHSHAHHHSMRNGH) the composition is skewed to basic residues. Over residues 63–79 (QHVRQPSLRSRSQQPMP) the composition is skewed to polar residues. The GBD/FH3 domain maps to 76-559 (QPMPTTDELD…HNEQELKKRD (484 aa)). Ser-225 is subject to Phosphoserine. Positions 572–584 (LSRSLPRSASSGD) are enriched in polar residues. The segment at 572–681 (LSRSLPRSAS…PPVAGFMPAP (110 aa)) is disordered. Pro residues-rich tracts occupy residues 605 to 614 (LPPPPPPMPA) and 622 to 640 (APPP…PPGF). Residues 641-654 (SPLGSPSGSLASTA) show a composition bias toward low complexity. The region spanning 687–1088 (IKRKVPTKYK…AALAASKKEN (402 aa)) is the FH2 domain. Residues 1136 to 1169 (DEVYNGALEDILLGLKSEPYRRADAVRRSQRRRI) form the DAD domain.

Belongs to the formin homology family. In terms of assembly, self-associates. Interacts (via GBD/FH3 domain) with Cdc42; the interaction is stronger with the GTP bound form of Cdc42.

In terms of biological role, together with Cdc42, involved in establishment of planar cell polarity in the developing compound eye by contributing to ommatidial rotation. Together with DAAM and Cdc42, has a role in neuronal development of mushroom bodies. This is Formin-like protein from Drosophila melanogaster (Fruit fly).